The sequence spans 349 residues: Threonine-rich protein (349 aa).

Positions 1-19 (MKGLTLACIAATVVAASHA) are cleaved as a signal peptide. The N-linked (GlcNAc...) asparagine glycan is linked to Asn257. A disordered region spans residues 300 to 326 (QPDVSPMSVRKRRQAESAEEDDDLVGD). Positions 316 to 326 (SAEEDDDLVGD) are enriched in acidic residues. Residues 316 to 349 (SAEEDDDLVGDMEDLKELEQEIQEALEEVEKLDV) adopt a coiled-coil conformation.

Component of the acid-insoluble and acid-soluble organic matrix of calcified layers of the shell (at protein level).

The protein resides in the secreted. The sequence is that of Threonine-rich protein from Lottia gigantea (Giant owl limpet).